Here is a 482-residue protein sequence, read N- to C-terminus: tRNA sulfurtransferase (482 aa).

The THUMP domain occupies 61-165; that stretch reads LAIRDALTRI…DDRLLLIKGR (105 aa). Residues 183 to 184, lysine 265, glycine 287, and glutamine 296 each bind ATP; that span reads LI. The cysteines at positions 344 and 456 are disulfide-linked. The Rhodanese domain maps to 404-482; that stretch reads FGPNDVILDI…GFNNVKVYRP (79 aa). Cysteine 456 functions as the Cysteine persulfide intermediate in the catalytic mechanism.

It belongs to the ThiI family.

Its subcellular location is the cytoplasm. It carries out the reaction [ThiI sulfur-carrier protein]-S-sulfanyl-L-cysteine + a uridine in tRNA + 2 reduced [2Fe-2S]-[ferredoxin] + ATP + H(+) = [ThiI sulfur-carrier protein]-L-cysteine + a 4-thiouridine in tRNA + 2 oxidized [2Fe-2S]-[ferredoxin] + AMP + diphosphate. The enzyme catalyses [ThiS sulfur-carrier protein]-C-terminal Gly-Gly-AMP + S-sulfanyl-L-cysteinyl-[cysteine desulfurase] + AH2 = [ThiS sulfur-carrier protein]-C-terminal-Gly-aminoethanethioate + L-cysteinyl-[cysteine desulfurase] + A + AMP + 2 H(+). The protein operates within cofactor biosynthesis; thiamine diphosphate biosynthesis. Its function is as follows. Catalyzes the ATP-dependent transfer of a sulfur to tRNA to produce 4-thiouridine in position 8 of tRNAs, which functions as a near-UV photosensor. Also catalyzes the transfer of sulfur to the sulfur carrier protein ThiS, forming ThiS-thiocarboxylate. This is a step in the synthesis of thiazole, in the thiamine biosynthesis pathway. The sulfur is donated as persulfide by IscS. In Escherichia coli (strain 55989 / EAEC), this protein is tRNA sulfurtransferase.